We begin with the raw amino-acid sequence, 551 residues long: RCC1 and BTB domain-containing protein 2 (551 aa).

6 RCC1 repeats span residues 64-115 (NDEI…VLAT), 117-169 (DGEV…VLTS), 171-222 (GEVF…AVVD), 223-274 (TGEV…VLTD), 276-326 (GQIY…AAKS), and 328-382 (GGHV…TVAE). A BTB domain is found at 394-457 (ADLKFLVDGK…LYTDNISLPP (64 aa)).

It localises to the cytoplasmic vesicle. Its subcellular location is the secretory vesicle. It is found in the acrosome. The protein is RCC1 and BTB domain-containing protein 2 (Rcbtb2) of Rattus norvegicus (Rat).